We begin with the raw amino-acid sequence, 289 residues long: NADPH-dependent 7-cyano-7-deazaguanine reductase (289 aa).

81-83 (IES) contacts substrate. NADPH is bound at residue 83–84 (SK). C196 functions as the Thioimide intermediate in the catalytic mechanism. The active-site Proton donor is D203. 235–236 (HE) serves as a coordination point for substrate. 264-265 (RG) is an NADPH binding site.

This sequence belongs to the GTP cyclohydrolase I family. QueF type 2 subfamily. In terms of assembly, homodimer.

Its subcellular location is the cytoplasm. It carries out the reaction 7-aminomethyl-7-carbaguanine + 2 NADP(+) = 7-cyano-7-deazaguanine + 2 NADPH + 3 H(+). Its pathway is tRNA modification; tRNA-queuosine biosynthesis. Catalyzes the NADPH-dependent reduction of 7-cyano-7-deazaguanine (preQ0) to 7-aminomethyl-7-deazaguanine (preQ1). This is NADPH-dependent 7-cyano-7-deazaguanine reductase from Albidiferax ferrireducens (strain ATCC BAA-621 / DSM 15236 / T118) (Rhodoferax ferrireducens).